Here is a 212-residue protein sequence, read N- to C-terminus: Large ribosomal subunit protein uL1 (212 aa).

The protein belongs to the universal ribosomal protein uL1 family. In terms of assembly, part of the 50S ribosomal subunit.

Its function is as follows. Binds directly to 23S rRNA. Probably involved in E site tRNA release. In terms of biological role, protein L1 is also a translational repressor protein, it controls the translation of its operon by binding to its mRNA. This is Large ribosomal subunit protein uL1 from Methanothrix thermoacetophila (strain DSM 6194 / JCM 14653 / NBRC 101360 / PT) (Methanosaeta thermophila).